We begin with the raw amino-acid sequence, 496 residues long: 3-octaprenyl-4-hydroxybenzoate carboxy-lyase (496 aa).

N181 lines the Mn(2+) pocket. Residues 184 to 186 (IYR), 198 to 200 (RWL), and 203 to 204 (RG) each bind prenylated FMN. Mn(2+) is bound at residue E247. D296 functions as the Proton donor in the catalytic mechanism.

It belongs to the UbiD family. Homohexamer. Prenylated FMN serves as cofactor. It depends on Mn(2+) as a cofactor.

Its subcellular location is the cell membrane. It catalyses the reaction a 4-hydroxy-3-(all-trans-polyprenyl)benzoate + H(+) = a 2-(all-trans-polyprenyl)phenol + CO2. The protein operates within cofactor biosynthesis; ubiquinone biosynthesis. Its function is as follows. Catalyzes the decarboxylation of 3-octaprenyl-4-hydroxy benzoate to 2-octaprenylphenol, an intermediate step in ubiquinone biosynthesis. In Aromatoleum aromaticum (strain DSM 19018 / LMG 30748 / EbN1) (Azoarcus sp. (strain EbN1)), this protein is 3-octaprenyl-4-hydroxybenzoate carboxy-lyase.